A 303-amino-acid polypeptide reads, in one-letter code: MSQNHDPAMLAKAETLTEALPYLQRYAGKTFVVKYGGHAMGDPELAQDFAEDIVLLKAVGINPVVVHGGGPQIGRMLKALGIESRFVDGLRVTDKQTAEVAEMVLAGAINKELVSWIARAGGKAIGISGKDGGMVIARKVEAKKAPKAVADAESGDPIVVDLGFVGEPDRIDTTVIDTICKAGMIPVIAPIGVGEDGETYNINADTMAGSIAAALGAARLFLLTDVPGVLDKDKNLLTDLRPADIARLAEDGTISGGMIPKLETCVHAVEAGCEATVVLDGRVPHAMLLEIFTARGAGTLIRA.

Substrate-binding positions include 69–70 (GG), Arg91, and Asn201.

It belongs to the acetylglutamate kinase family. ArgB subfamily.

The protein localises to the cytoplasm. It catalyses the reaction N-acetyl-L-glutamate + ATP = N-acetyl-L-glutamyl 5-phosphate + ADP. Its pathway is amino-acid biosynthesis; L-arginine biosynthesis; N(2)-acetyl-L-ornithine from L-glutamate: step 2/4. Its function is as follows. Catalyzes the ATP-dependent phosphorylation of N-acetyl-L-glutamate. This is Acetylglutamate kinase from Novosphingobium aromaticivorans (strain ATCC 700278 / DSM 12444 / CCUG 56034 / CIP 105152 / NBRC 16084 / F199).